Here is a 63-residue protein sequence, read N- to C-terminus: Large ribosomal subunit protein bL28 (63 aa).

Belongs to the bacterial ribosomal protein bL28 family.

The polypeptide is Large ribosomal subunit protein bL28 (Clostridium botulinum (strain ATCC 19397 / Type A)).